The following is a 370-amino-acid chain: Peptidyl-prolyl cis-trans isomerase D (370 aa).

The region spanning 11–176 is the PPIase cyclophilin-type domain; it reads FFDISADGKP…EDWIISDCGE (166 aa). TPR repeat units lie at residues 218–251, 269–302, and 307–340; these read VTTL…LNDY, LSCY…EAID, and TKAL…SPED.

It belongs to the cyclophilin-type PPIase family. PPIase D subfamily.

The protein localises to the cytoplasm. It catalyses the reaction [protein]-peptidylproline (omega=180) = [protein]-peptidylproline (omega=0). Its function is as follows. PPIases accelerate the folding of proteins. It catalyzes the cis-trans isomerization of proline imidic peptide bonds in oligopeptides. This Debaryomyces hansenii (strain ATCC 36239 / CBS 767 / BCRC 21394 / JCM 1990 / NBRC 0083 / IGC 2968) (Yeast) protein is Peptidyl-prolyl cis-trans isomerase D (CPR6).